A 654-amino-acid polypeptide reads, in one-letter code: Tetratricopeptide repeat protein 30 homolog (654 aa).

7 TPR repeats span residues Asp10–Arg43, Ala44–Val76, Ala145–Asn178, His180–Asn212, Cys393–Ile426, Ser452–Asp485, and Cys535–Ala568.

Belongs to the TTC30/dfy-1/fleer family.

The protein resides in the cell projection. The protein localises to the cilium. In terms of biological role, required for polyglutamylation of axonemal tubulin in sensory cilia. Plays a role in anterograde intraflagellar transport (IFT), the process by which cilia precursors are transported from the base of the cilium to the site of their incorporation at the tip. This is Tetratricopeptide repeat protein 30 homolog from Anopheles gambiae (African malaria mosquito).